A 75-amino-acid polypeptide reads, in one-letter code: uncharacterized protein (75 aa).

A signal peptide spans 1–19 (MQCVCLCVFVLLLAGCVTS).

As to expression, nacreous layer of shell (at protein level).

It localises to the secreted. This is an uncharacterized protein from Margaritifera margaritifera (Freshwater pearl mussel).